Reading from the N-terminus, the 476-residue chain is G-patch domain and KOW motifs-containing protein (476 aa).

The disordered stretch occupies residues 1–96 (MADSKEGVLP…PGPSTDTGAL (96 aa)). Ala-2 carries the N-acetylalanine modification. A Glycyl lysine isopeptide (Lys-Gly) (interchain with G-Cter in SUMO2) cross-link involves residue Lys-5. Residues 13–26 (AASTAPISFGFTRT) show a composition bias toward polar residues. The residue at position 27 (Ser-27) is a Phosphoserine; by PKA. Phosphoserine occurs at positions 35 and 42. The segment covering 43-58 (PEEKDFLKTVEGRELQ) has biased composition (basic and acidic residues). The residue at position 115 (Ser-115) is a Phosphoserine. In terms of domain architecture, G-patch spans 164-210 (VEAYGLAMLRGMGWKPGEGIGRTFNQVVKPRVNSLRPKGLGLGANLT). The interval 203 to 244 (LGLGANLTEAQALTPTGPSRMPRPDEEQEKDKEDQPQGLVPG) is disordered. A compositionally biased stretch (polar residues) spans 210-219 (TEAQALTPTG). Phosphothreonine is present on Thr-216. Residues 224–237 (PRPDEEQEKDKEDQ) are compositionally biased toward basic and acidic residues. Residues 240-267 (GLVPGGAVVVLSGPHRGLYGKVEGLDPD) enclose the KOW 1 domain. Thr-316 is modified (phosphothreonine; by PKA). Residues 327–353 (DNSERKRKHLPDRQDGPAAKSEKAAPR) are disordered. Residues 337-351 (PDRQDGPAAKSEKAA) are compositionally biased toward basic and acidic residues. The 28-residue stretch at 415 to 442 (PKAEGDRVMVVLGPQTGRVGHLLSRDRA) folds into the KOW 2 domain. Ser-471 is modified (phosphoserine). Thr-473 carries the phosphothreonine modification.

This sequence belongs to the MOS2 family. As to quaternary structure, component of the minor spliceosome, which splices U12-type introns. Interacts with PRKX. Interacts with DHX16. Interacts with PRKACB. In terms of processing, phosphorylation regulates its ability to bind RNA.

Its subcellular location is the nucleus. In terms of biological role, RNA-binding protein involved in pre-mRNA splicing. As a component of the minor spliceosome, involved in the splicing of U12-type introns in pre-mRNAs. This is G-patch domain and KOW motifs-containing protein (GPKOW) from Homo sapiens (Human).